Here is a 120-residue protein sequence, read N- to C-terminus: MARSMKLACVALVICMVVIAPMAEAALSCGTVSADMAPCVTYLQAPNNASPPPPCCAGVKKLLAAATTTPDRQAACNCLKSAAGSIPKLNTNNAAALPGKCGVSIPYKISTSTNCNTVRF.

An N-terminal signal peptide occupies residues 1-25 (MARSMKLACVALVICMVVIAPMAEA). Intrachain disulfides connect Cys-29-Cys-78, Cys-39-Cys-55, Cys-56-Cys-101, and Cys-76-Cys-115. Phe-120 is a propeptide.

This sequence belongs to the plant LTP family. Expressed in roots, stem, leaves and tendrils of the mature plant.

Functionally, plant non-specific lipid-transfer proteins transfer phospholipids as well as galactolipids across membranes. May play a role in wax or cutin deposition in the cell walls of expanding epidermal cells and certain secretory tissues. Binds saturated and unsaturated lipids, jasmonic acid and lysolipids. Has antifungal activity against A.niger VKM F-2259 (IC(50)=40 uM), F.oxysporum TCXA-4 (IC(50)=20-40), F.solani VKM F-142 (IC(50)=20-40 uM) and N.crassa VKM F-184 (IC(50)=40 uM). Has weak antibacterial activity against A.tumefaciens A281, C.michiganensis VKM Ac-1144 and P.syringae VKM B-1546. This is Non-specific lipid-transfer protein 1 from Pisum sativum (Garden pea).